A 603-amino-acid polypeptide reads, in one-letter code: Sabinene hydrate synthase, chloroplastic (603 aa).

Residues 1-47 (MSTISINHVGLLRNPLHGKSKRASINKSWSLCLPRSSSASRLVKPCR) constitute a chloroplast transit peptide. Residues aspartate 357 and aspartate 361 each contribute to the Mn(2+) site. A DDXXD motif motif is present at residues 357–361 (DDVYD). Homodimerization regions lie at residues 363–369 (YGTLDEL) and 435–472 (EAEW…VSIP). Mn(2+)-binding residues include aspartate 501 and glutamate 509.

The protein belongs to the terpene synthase family. Homodimer. Mn(2+) is required as a cofactor. Requires Mg(2+) as cofactor.

Its subcellular location is the plastid. It localises to the chloroplast. It catalyses the reaction (2E)-geranyl diphosphate + H2O = sabinene hydrate + diphosphate. Its pathway is secondary metabolite biosynthesis; terpenoid biosynthesis. In terms of biological role, involved in the biosynthesis of phenolic monoterpenes natural products. Monoterpene synthase which catalyzes the conversion of geranyl diphosphate (GPP) to sabinene hydrate, mainly (Z)-sabinene hydrate and to a lower extent (E)-sabinene hydrate, and the formation of minor amounts and traces of several other monoterpenes (e.g. mainly alpha-thujene, alpha-pinene and myrcene). In Thymus vulgaris (Thyme), this protein is Sabinene hydrate synthase, chloroplastic.